We begin with the raw amino-acid sequence, 236 residues long: Purine nucleoside phosphorylase DeoD-type (236 aa).

H5 contributes to the a purine D-ribonucleoside binding site. Residues G21, R25, R44, and 88–91 each bind phosphate; that span reads RVGS. A purine D-ribonucleoside-binding positions include 180-182 and 204-205; these read EME and SD. The Proton donor role is filled by D205.

Belongs to the PNP/UDP phosphorylase family. In terms of assembly, homohexamer; trimer of homodimers.

It carries out the reaction a purine D-ribonucleoside + phosphate = a purine nucleobase + alpha-D-ribose 1-phosphate. It catalyses the reaction a purine 2'-deoxy-D-ribonucleoside + phosphate = a purine nucleobase + 2-deoxy-alpha-D-ribose 1-phosphate. In terms of biological role, catalyzes the reversible phosphorolytic breakdown of the N-glycosidic bond in the beta-(deoxy)ribonucleoside molecules, with the formation of the corresponding free purine bases and pentose-1-phosphate. This is Purine nucleoside phosphorylase DeoD-type from Psychromonas ingrahamii (strain DSM 17664 / CCUG 51855 / 37).